The primary structure comprises 424 residues: Serine hydroxymethyltransferase (424 aa).

Residues L118 and 122-124 (GHL) each bind (6S)-5,6,7,8-tetrahydrofolate. Residue K227 is modified to N6-(pyridoxal phosphate)lysine. 351–353 (SPF) lines the (6S)-5,6,7,8-tetrahydrofolate pocket.

This sequence belongs to the SHMT family. As to quaternary structure, homodimer. Pyridoxal 5'-phosphate is required as a cofactor.

The protein resides in the cytoplasm. The catalysed reaction is (6R)-5,10-methylene-5,6,7,8-tetrahydrofolate + glycine + H2O = (6S)-5,6,7,8-tetrahydrofolate + L-serine. It participates in one-carbon metabolism; tetrahydrofolate interconversion. Its pathway is amino-acid biosynthesis; glycine biosynthesis; glycine from L-serine: step 1/1. In terms of biological role, catalyzes the reversible interconversion of serine and glycine with tetrahydrofolate (THF) serving as the one-carbon carrier. This reaction serves as the major source of one-carbon groups required for the biosynthesis of purines, thymidylate, methionine, and other important biomolecules. Also exhibits THF-independent aldolase activity toward beta-hydroxyamino acids, producing glycine and aldehydes, via a retro-aldol mechanism. In Thermosipho melanesiensis (strain DSM 12029 / CIP 104789 / BI429), this protein is Serine hydroxymethyltransferase.